The chain runs to 355 residues: D-alanine--D-alanine ligase (355 aa).

In terms of domain architecture, ATP-grasp spans 143–350 (KKIFSHLEIP…IDQLVAKLVD (208 aa)). Position 178–233 (178–233 (IEKLKLPVFVKPANSGSSLGISKAKTRSEIIKALQKAWEIDSRIVIEEGLDVRELE)) interacts with ATP. Mg(2+) contacts are provided by Asp303, Glu317, and Asn319.

The protein belongs to the D-alanine--D-alanine ligase family. The cofactor is Mg(2+). Mn(2+) serves as cofactor.

It localises to the cytoplasm. It carries out the reaction 2 D-alanine + ATP = D-alanyl-D-alanine + ADP + phosphate + H(+). Its pathway is cell wall biogenesis; peptidoglycan biosynthesis. Cell wall formation. In Prochlorococcus marinus subsp. pastoris (strain CCMP1986 / NIES-2087 / MED4), this protein is D-alanine--D-alanine ligase.